Consider the following 328-residue polypeptide: Ribosomal RNA small subunit methyltransferase H (328 aa).

S-adenosyl-L-methionine-binding positions include Gly-37–His-39, Asp-57, Phe-83, Asp-104, and Gln-111.

This sequence belongs to the methyltransferase superfamily. RsmH family.

The protein localises to the cytoplasm. The enzyme catalyses cytidine(1402) in 16S rRNA + S-adenosyl-L-methionine = N(4)-methylcytidine(1402) in 16S rRNA + S-adenosyl-L-homocysteine + H(+). Specifically methylates the N4 position of cytidine in position 1402 (C1402) of 16S rRNA. This chain is Ribosomal RNA small subunit methyltransferase H, found in Neisseria meningitidis serogroup C / serotype 2a (strain ATCC 700532 / DSM 15464 / FAM18).